A 349-amino-acid chain; its full sequence is Putative transport protein YhhT (349 aa).

The Cytoplasmic portion of the chain corresponds to 1-10 (METPQPDKTG). A helical transmembrane segment spans residues 11-31 (MHILLKLASLVVILAGIHAAA). Aspartate 32 is a topological domain (periplasmic). The helical transmembrane segment at 33 to 53 (IIVQLLLALFFAIVLNPLVTW) threads the bilayer. Residues 54-62 (FIRRGVQRP) lie on the Cytoplasmic side of the membrane. The helical transmembrane segment at 63-83 (VAITIVVVVMLIALTALVGVL) threads the bilayer. At 84-142 (AASFNEFISMLPKFNKELTRKLFKLQEMLPFLNLHMSPERMLQRMDSEKVVTFTTALMT) the chain is on the periplasmic side. The helical transmembrane segment at 143-163 (GLSGAMASVLLLVMTVVFMLF) threads the bilayer. The Cytoplasmic portion of the chain corresponds to 164–208 (EVRHVPYKMRFALNNPQIHIAGLHRALKGVSHYLALKTLLSLWTG). The helical transmembrane segment at 209–229 (VIVWLGLELMGVQFALMWAVL) threads the bilayer. Over 230-234 (AFLLN) the chain is Periplasmic. The helical transmembrane segment at 235–255 (YVPNIGAVISAVPPMIQVLLF) threads the bilayer. Topologically, residues 256–257 (NG) are cytoplasmic. The helical transmembrane segment at 258-278 (VYECILVGALFLVVHMVIGNI) threads the bilayer. The Periplasmic segment spans residues 279-292 (LEPRMMGHRLGMST). The helical transmembrane segment at 293-313 (MVVFLSLLIWGWLLGPVGMLL) threads the bilayer. Over 314–349 (SVPLTSVCKIWMETTKGGSKLAILLGPGRPKSRLPG) the chain is Cytoplasmic.

Belongs to the autoinducer-2 exporter (AI-2E) (TC 2.A.86) family.

The protein resides in the cell inner membrane. The sequence is that of Putative transport protein YhhT (yhhT) from Escherichia coli O157:H7.